A 310-amino-acid polypeptide reads, in one-letter code: tRNA uridine(34) hydroxylase (310 aa).

Residues 123–217 form the Rhodanese domain; the sequence is ADPDVVVIDV…YLEKVPEDES (95 aa). Residue C177 is the Cysteine persulfide intermediate of the active site.

The protein belongs to the TrhO family.

It catalyses the reaction uridine(34) in tRNA + AH2 + O2 = 5-hydroxyuridine(34) in tRNA + A + H2O. In terms of biological role, catalyzes oxygen-dependent 5-hydroxyuridine (ho5U) modification at position 34 in tRNAs. The chain is tRNA uridine(34) hydroxylase from Acaryochloris marina (strain MBIC 11017).